The sequence spans 578 residues: Polymerase acidic protein (578 aa).

In terms of assembly, the RNA polymerase is composed of three subunits: PB1, PB2 and PA. Post-translationally, phosphorylated on serines and threonines by host kinases.

Implicated in endonuclease cleavage of capped RNA primers. Displays an elongation factor activity in viral RNA synthesis. Dispensable for viral transcription, but not replication. This is Polymerase acidic protein from Infectious salmon anemia virus (isolate Atlantic salmon/Norway/810/9/99) (ISAV).